The primary structure comprises 1502 residues: DNA-directed RNA polymerase subunit beta' (1502 aa).

Zn(2+) is bound by residues cysteine 60, cysteine 62, cysteine 75, and cysteine 78. A disordered region spans residues 265–293 (RKQRDLEDAEQLTGAERERKEYEASQERE). Positions 279–293 (AERERKEYEASQERE) are enriched in basic and acidic residues. Residues aspartate 626, aspartate 628, and aspartate 630 each coordinate Mg(2+). Zn(2+)-binding residues include cysteine 1002, cysteine 1075, cysteine 1082, and cysteine 1085. The interval 1472 to 1502 (SDDNGDEVGKNGEFADETPFTGDSDDRDNEI) is disordered.

This sequence belongs to the RNA polymerase beta' chain family. As to quaternary structure, the RNAP catalytic core consists of 2 alpha, 1 beta, 1 beta' and 1 omega subunit. When a sigma factor is associated with the core the holoenzyme is formed, which can initiate transcription. It depends on Mg(2+) as a cofactor. Zn(2+) serves as cofactor.

The catalysed reaction is RNA(n) + a ribonucleoside 5'-triphosphate = RNA(n+1) + diphosphate. In terms of biological role, DNA-dependent RNA polymerase catalyzes the transcription of DNA into RNA using the four ribonucleoside triphosphates as substrates. The protein is DNA-directed RNA polymerase subunit beta' of Roseiflexus castenholzii (strain DSM 13941 / HLO8).